Here is a 681-residue protein sequence, read N- to C-terminus: Pescadillo homolog (681 aa).

The BRCT domain occupies 350-469; the sequence is TAGALFAPFT…KLLRPDLYAP (120 aa). Residues 489-681 are disordered; that stretch reads DPRASLAEQE…RRKLEKGAEK (193 aa). A coiled-coil region spans residues 491–527; the sequence is RASLAEQEEEGEAEIAAEEEEEDSDEEMEEATDGKKV. Residues 496–521 are compositionally biased toward acidic residues; sequence EQEEEGEAEIAAEEEEEDSDEEMEEA. The segment covering 522-533 has biased composition (basic and acidic residues); that stretch reads TDGKKVDAKAED. Acidic residues-rich tracts occupy residues 534-546 and 554-586; these read SAEE…DDSV and GTDD…DEEE. Residues 574 to 681 are a coiled coil; sequence EEEAASESED…RRKLEKGAEK (108 aa). Over residues 587–597 the composition is skewed to basic and acidic residues; sequence SARTQHQKELE. A compositionally biased stretch (basic residues) spans 617–629; that stretch reads KKSSQAKKVASKK. Residues 630–640 are compositionally biased toward basic and acidic residues; it reads RKEEEELERQK.

This sequence belongs to the pescadillo family. Component of the NOP7 complex, composed of erb1, nop7 and ytm1. The complex is held together by erb1, which interacts with nop7 via its N-terminal domain and with ytm1 via a high-affinity interaction between the seven-bladed beta-propeller domains of the 2 proteins. The NOP7 complex associates with the 66S pre-ribosome.

The protein localises to the nucleus. The protein resides in the nucleolus. It localises to the nucleoplasm. Component of the NOP7 complex, which is required for maturation of the 25S and 5.8S ribosomal RNAs and formation of the 60S ribosome. In Aspergillus oryzae (strain ATCC 42149 / RIB 40) (Yellow koji mold), this protein is Pescadillo homolog (nop7).